The chain runs to 1159 residues: MSEPRFVHLRVHSDFSMINGIAKVKPLIKACVDNHMVAMGLTDFTNFCGLVRFYGEALSAGVKPIIGADVLVRSELCGDEPFELTLLAKNNIGYHNITLLLSKAYERGYQDLPYLDQAWLAEHREGIIVLSGGHNGDVGKKLLKGHAAEIESAVAFYQDFFPDHFYLSLSRTGRYEEERYVSLALTLAEEKGLPVVATNDVLFLHEDDFEAHEIRVAIHDSYTLDDPKRPKLYTNQQYFRSEQEMCDLFADVPSALENTLLIAQRCNVTIRLGEYFLPQFPTGDLSTEDFLVKKSKEGLEERLKFLFPDEKVRQARRPEYDERLQVELDVINQMGFPGYFLIVMEFIQWSKDNDIPVGPGRGSGAGSLVAYALKITDLDPLEFDLLFERFLNPERVSMPDFDVDFCMDGRDRVIDHVAETYGRGAVSQIITFGTMAAKAVIRDVGRVLGHPYGFVDRISKLIPPDPGMTLAKAFAAEPQLQAVYDSDEEVKALIDMARKLEGVTRNAGKHAGGVVISPGLITDFSPLYCDSEGKHPVTHFDKNDVEYAGLVKFDFLGLRTLTIIKWALDMINTRLAKEGKPPVDIATIPLDDPASFELLKRSETTAVFQLESRGMKDLIKRLQPDCFEDIIALVALFRPGPLESGMVQNFIDRKHGNEVVAYPDPEYQHDSLKPILEPTYGVIVYQEQVMQIAQELAGYTLGGADLLRRAMGKKKPEEMAAQREIFEKGAIQKGVDGELAMKIFDLVEKFAGYGFNKSHSAAYALVSYQTLWLKTHYPAEFMAAVMTSEMDNTDKIVGLYDECLRMGLKVAPPDINTGKHHFSVNEYGEIVYGIGAIKGVGEGPIEALISAREQGGIFKDLFDLCARVDLKKINRRTFESLILSGAFDKLGPHRAALSKNLEDALKASDQHAKDAAMGQADMFGVLTESHEDVEKAYASTPRWSEKVILEGERETLGLYLSSHPISPYLKELAHYSATRLKDLVPNSRGQMSTVSGLLVSSRFAVTKKGNRLGIATLDDRSGRLDITLFGEALDKYADKLQKDTVIIVSGQVSFDEFSGGLKMSVRELMSLDEARSRYAKSLAICLSEENMKPTFIRELKALLTPYSGGTLPIYVYYASTAGQCRVKMGVQWSVNPTDQLFTELAEKLGENAVELEFQS.

This sequence belongs to the DNA polymerase type-C family. DnaE subfamily. DNA polymerase III contains a core (composed of alpha, epsilon and theta chains) that associates with a tau subunit. This core dimerizes to form the PolIII' complex. PolIII' associates with the gamma complex (composed of gamma, delta, delta', psi and chi chains) and with the beta chain to form the complete DNA polymerase III complex.

The protein resides in the cytoplasm. It carries out the reaction DNA(n) + a 2'-deoxyribonucleoside 5'-triphosphate = DNA(n+1) + diphosphate. Functionally, DNA polymerase III is a complex, multichain enzyme responsible for most of the replicative synthesis in bacteria. This DNA polymerase also exhibits 3' to 5' exonuclease activity. The alpha chain is the DNA polymerase. This is DNA polymerase III subunit alpha (dnaE) from Pasteurella multocida (strain Pm70).